The chain runs to 450 residues: Probable ECA polymerase (450 aa).

The next 11 membrane-spanning stretches (helical) occupy residues 6 to 26 (FSGL…LTWF), 37 to 57 (VFFS…TSVL), 63 to 83 (VGVA…CFYA), 118 to 138 (VILM…NGFL), 155 to 175 (GVAL…VYFL), 181 to 201 (AWLF…MIVG), 207 to 227 (IIIA…ISLW), 228 to 248 (MLAA…LKRY), 341 to 361 (LVVM…GLII), 378 to 398 (YKAA…IVLA), and 410 to 430 (VFFI…YWLF).

This sequence belongs to the WzyE family. As to quaternary structure, probably part of a complex composed of WzxE, WzyE and WzzE.

Its subcellular location is the cell inner membrane. The protein operates within bacterial outer membrane biogenesis; enterobacterial common antigen biosynthesis. In terms of biological role, probably involved in the polymerization of enterobacterial common antigen (ECA) trisaccharide repeat units. The chain is Probable ECA polymerase from Escherichia fergusonii (strain ATCC 35469 / DSM 13698 / CCUG 18766 / IAM 14443 / JCM 21226 / LMG 7866 / NBRC 102419 / NCTC 12128 / CDC 0568-73).